The primary structure comprises 358 residues: MLKTPLYESHMAANAKMVDFSGWSMPINYGSQIQEHNNVREDCGIFDVSHMLAVDIQGSEAEKFLRYLLANDVAKLQENKAQYGCMLNHDAGIVDDLITYKVTDEHFRIVVNAGNRESDVAWFNQNAQNFDVAITPQTDLAIVAVQGPKAVAVIKRVVTKEIATEIEALLPFSFKFFSKWMVARTGYTGEDGFEVILPATQVKKFWDSLLENGAQPAGLGARDTLRLEAGMHLYGADMDTSTTPLERGLGWSVDLSDEHRDFIGKKAYFAKKAQGVDTKWVGVVLKTKGVLRAGQEIDFDNGEKGYITSGSFSPTLKVAIGLAYVPKQADNPVVNIRGKELEVELVKPKFVKNGKSLI.

Belongs to the GcvT family. As to quaternary structure, the glycine cleavage system is composed of four proteins: P, T, L and H.

It carries out the reaction N(6)-[(R)-S(8)-aminomethyldihydrolipoyl]-L-lysyl-[protein] + (6S)-5,6,7,8-tetrahydrofolate = N(6)-[(R)-dihydrolipoyl]-L-lysyl-[protein] + (6R)-5,10-methylene-5,6,7,8-tetrahydrofolate + NH4(+). Functionally, the glycine cleavage system catalyzes the degradation of glycine. In Francisella tularensis subsp. tularensis (strain FSC 198), this protein is Aminomethyltransferase.